Here is a 616-residue protein sequence, read N- to C-terminus: Chaperone protein HscA (616 aa).

Belongs to the heat shock protein 70 family.

In terms of biological role, chaperone involved in the maturation of iron-sulfur cluster-containing proteins. Has a low intrinsic ATPase activity which is markedly stimulated by HscB. Involved in the maturation of IscU. This chain is Chaperone protein HscA, found in Yersinia enterocolitica serotype O:8 / biotype 1B (strain NCTC 13174 / 8081).